Consider the following 473-residue polypeptide: Methionine aminopeptidase 2 (473 aa).

The disordered stretch occupies residues 23–121; it reads LAEDSSNGTQ…KLVSIDQSYP (99 aa). Positions 41 to 53 are enriched in polar residues; the sequence is KATTAVGQDNGNN. Over residues 73–83 the composition is skewed to acidic residues; it reads DDDDDDEDDDV. Over residues 84–93 the composition is skewed to low complexity; the sequence is AAAAAAVGDA. Positions 97 to 113 are enriched in basic residues; that stretch reads KKKKKKKSSNKKKKKKL. Position 224 (His224) interacts with substrate. Residues Asp244, Asp255, and His326 each contribute to the a divalent metal cation site. A substrate-binding site is contributed by His334. A divalent metal cation-binding residues include Glu359 and Glu454.

The protein belongs to the peptidase M24A family. Methionine aminopeptidase eukaryotic type 2 subfamily. It depends on Co(2+) as a cofactor. The cofactor is Zn(2+). Requires Mn(2+) as cofactor. Fe(2+) is required as a cofactor.

The protein resides in the cytoplasm. The catalysed reaction is Release of N-terminal amino acids, preferentially methionine, from peptides and arylamides.. Functionally, cotranslationally removes the N-terminal methionine from nascent proteins. The N-terminal methionine is often cleaved when the second residue in the primary sequence is small and uncharged (Met-Ala-, Cys, Gly, Pro, Ser, Thr, or Val). In Lodderomyces elongisporus (strain ATCC 11503 / CBS 2605 / JCM 1781 / NBRC 1676 / NRRL YB-4239) (Yeast), this protein is Methionine aminopeptidase 2.